The sequence spans 110 residues: Integration host factor subunit beta (110 aa).

Belongs to the bacterial histone-like protein family. Heterodimer of an alpha and a beta chain.

In terms of biological role, this protein is one of the two subunits of integration host factor, a specific DNA-binding protein that functions in genetic recombination as well as in transcriptional and translational control. The chain is Integration host factor subunit beta from Parvibaculum lavamentivorans (strain DS-1 / DSM 13023 / NCIMB 13966).